Here is a 110-residue protein sequence, read N- to C-terminus: Small ribosomal subunit protein eS24 (110 aa).

The interval 91-110 (RNKVEEQAEEAEEAEAGAAE) is disordered. Acidic residues predominate over residues 97–110 (QAEEAEEAEAGAAE).

The protein belongs to the eukaryotic ribosomal protein eS24 family.

The chain is Small ribosomal subunit protein eS24 from Archaeoglobus fulgidus (strain ATCC 49558 / DSM 4304 / JCM 9628 / NBRC 100126 / VC-16).